A 191-amino-acid chain; its full sequence is Large ribosomal subunit protein bL9 (191 aa).

Residues 149–191 form a disordered region; that stretch reads EEAERQSKGESLTSADAIYGVDEDALRPEDFFDPEADGNEDDE. Positions 179–191 are enriched in acidic residues; the sequence is FFDPEADGNEDDE.

It belongs to the bacterial ribosomal protein bL9 family.

Its function is as follows. Binds to the 23S rRNA. This Agrobacterium fabrum (strain C58 / ATCC 33970) (Agrobacterium tumefaciens (strain C58)) protein is Large ribosomal subunit protein bL9 (rplI).